Reading from the N-terminus, the 324-residue chain is Nidogen-1 (324 aa).

In terms of domain architecture, NIDO spans 16 to 178 (PFLADLDTTD…GVWVFEIGSP (163 aa)). N-linked (GlcNAc...) asparagine glycosylation occurs at N97. Sulfotyrosine occurs at positions 200 and 205. A disordered region spans residues 219-259 (TQPFPSHSPRRGYPDPHNVPRTLAPSYEATERPHGIPTERT). Basic and acidic residues predominate over residues 247-259 (ATERPHGIPTERT). An EGF-like domain is found at 295 to 324 (SQQTCANNRHQCSVHAECRDYATGFCCRCV). Cystine bridges form between C299/C312 and C306/C321.

As to quaternary structure, interacts with FBLN1. Interacts with LGALS3BP. Interacts with PLXDC1. Interacts with SVEP1. N- and O-glycosylated.

It localises to the secreted. The protein resides in the extracellular space. The protein localises to the extracellular matrix. It is found in the basement membrane. Functionally, sulfated glycoprotein widely distributed in basement membranes and tightly associated with laminin. Also binds to collagen IV and perlecan. It probably has a role in cell-extracellular matrix interactions. This chain is Nidogen-1 (Nid1), found in Rattus norvegicus (Rat).